Reading from the N-terminus, the 394-residue chain is DNA replication and repair protein RecF (394 aa).

30-37 (GSNGQGKT) contributes to the ATP binding site.

The protein belongs to the RecF family.

It localises to the cytoplasm. The RecF protein is involved in DNA metabolism; it is required for DNA replication and normal SOS inducibility. RecF binds preferentially to single-stranded, linear DNA. It also seems to bind ATP. The chain is DNA replication and repair protein RecF from Cutibacterium acnes (strain DSM 16379 / KPA171202) (Propionibacterium acnes).